The primary structure comprises 337 residues: MSVEVFYDDDADLGLIQGRTVAVIGYGSQGHAHALSLRDSGVAVVIGLPAGSKSRPKAEEQGLRVLTPAEAAAEADIIMILAPDTAQRALYTDSIAPHLTAGKALLFGHGFNIRYGLITPPVDVDVAMIAPKGPGHLVRRQYVDGKGVPCLVAVEQDASGSALGLALAYAKAIGGTRAGVIKTTFTEETETDLFGEQAVLCGGAAALVQTGFEVLTEAGYAPEVAYFECLHELKLIVDLMYEGGIARMRYSISDTAEYGDLSRGPRVIDSQVKERMRAVLGEIQSGEFAREWVAEDEAGRPNFAKWRAEGAAHPIEETGGRLRAMMSWVDRPITETA.

Residues 3-183 (VEVFYDDDAD…GGTRAGVIKT (181 aa)) form the KARI N-terminal Rossmann domain. NADP(+) is bound by residues 26-29 (YGSQ), serine 52, serine 54, and 84-87 (DTAQ). The active site involves histidine 109. NADP(+) is bound at residue glycine 135. The KARI C-terminal knotted domain occupies 184–329 (TFTEETETDL…GRLRAMMSWV (146 aa)). 4 residues coordinate Mg(2+): aspartate 192, glutamate 196, glutamate 228, and glutamate 232. Serine 253 lines the substrate pocket.

It belongs to the ketol-acid reductoisomerase family. Mg(2+) is required as a cofactor.

It catalyses the reaction (2R)-2,3-dihydroxy-3-methylbutanoate + NADP(+) = (2S)-2-acetolactate + NADPH + H(+). The catalysed reaction is (2R,3R)-2,3-dihydroxy-3-methylpentanoate + NADP(+) = (S)-2-ethyl-2-hydroxy-3-oxobutanoate + NADPH + H(+). It functions in the pathway amino-acid biosynthesis; L-isoleucine biosynthesis; L-isoleucine from 2-oxobutanoate: step 2/4. The protein operates within amino-acid biosynthesis; L-valine biosynthesis; L-valine from pyruvate: step 2/4. Involved in the biosynthesis of branched-chain amino acids (BCAA). Catalyzes an alkyl-migration followed by a ketol-acid reduction of (S)-2-acetolactate (S2AL) to yield (R)-2,3-dihydroxy-isovalerate. In the isomerase reaction, S2AL is rearranged via a Mg-dependent methyl migration to produce 3-hydroxy-3-methyl-2-ketobutyrate (HMKB). In the reductase reaction, this 2-ketoacid undergoes a metal-dependent reduction by NADPH to yield (R)-2,3-dihydroxy-isovalerate. The protein is Ketol-acid reductoisomerase (NADP(+)) of Salinispora tropica (strain ATCC BAA-916 / DSM 44818 / JCM 13857 / NBRC 105044 / CNB-440).